We begin with the raw amino-acid sequence, 105 residues long: Small ribosomal subunit protein uS10 (105 aa).

It belongs to the universal ribosomal protein uS10 family. As to quaternary structure, part of the 30S ribosomal subunit.

Involved in the binding of tRNA to the ribosomes. The sequence is that of Small ribosomal subunit protein uS10 from Rickettsia canadensis (strain McKiel).